Here is a 645-residue protein sequence, read N- to C-terminus: Glucans biosynthesis glucosyltransferase H (645 aa).

Residues 1-12 are compositionally biased toward polar residues; it reads MDGTVTLSSTPT. The tract at residues 1–22 is disordered; that stretch reads MDGTVTLSSTPTAIPPVSALDA. 7 helical membrane-spanning segments follow: residues 64–84, 98–118, 423–443, 465–485, 504–524, 559–579, and 580–600; these read LIGGTFAATAVAVWVMLSVLW, LFTLLFAWIAMSFASAVAGFV, APMWGLLMLIGIGIPLAGVGI, AIWIFICTMFVLLAPKLLGYI, AVSILLETVLAALMAPVVMYL, YGGLTVFGLFMGAVAYAVSPA, and LAAWMGPVIVGMALSIPVVAL.

Belongs to the glycosyltransferase 2 family. OpgH subfamily.

The protein resides in the cell inner membrane. Its pathway is glycan metabolism; osmoregulated periplasmic glucan (OPG) biosynthesis. In terms of biological role, involved in the biosynthesis of osmoregulated periplasmic glucans (OPGs). This Xanthomonas oryzae pv. oryzae (strain MAFF 311018) protein is Glucans biosynthesis glucosyltransferase H.